The sequence spans 81 residues: Photosystem I iron-sulfur center (81 aa).

2 4Fe-4S ferredoxin-type domains span residues Met1–Trp31 and Gly37–Tyr68. [4Fe-4S] cluster is bound by residues Cys11, Cys14, Cys17, Cys21, Cys48, Cys51, Cys54, and Cys58.

In terms of assembly, the cyanobacterial PSI reaction center is composed of one copy each of PsaA,B,C,D,E,F,I,J,K,L,M and X, and forms trimeric complexes. It depends on [4Fe-4S] cluster as a cofactor.

The protein localises to the cellular thylakoid membrane. The enzyme catalyses reduced [plastocyanin] + hnu + oxidized [2Fe-2S]-[ferredoxin] = oxidized [plastocyanin] + reduced [2Fe-2S]-[ferredoxin]. Its function is as follows. Apoprotein for the two 4Fe-4S centers FA and FB of photosystem I (PSI); essential for photochemical activity. FB is the terminal electron acceptor of PSI, donating electrons to ferredoxin. The C-terminus interacts with PsaA/B/D and helps assemble the protein into the PSI complex. Required for binding of PsaD and PsaE to PSI. PSI is a plastocyanin/cytochrome c6-ferredoxin oxidoreductase, converting photonic excitation into a charge separation, which transfers an electron from the donor P700 chlorophyll pair to the spectroscopically characterized acceptors A0, A1, FX, FA and FB in turn. This Acaryochloris marina (strain MBIC 11017) protein is Photosystem I iron-sulfur center.